We begin with the raw amino-acid sequence, 357 residues long: UDP-N-acetylglucosamine--N-acetylmuramyl-(pentapeptide) pyrophosphoryl-undecaprenol N-acetylglucosamine transferase (357 aa).

UDP-N-acetyl-alpha-D-glucosamine is bound by residues 12 to 14 (TGG), asparagine 124, arginine 163, serine 189, isoleucine 243, 262 to 267 (ALTVSE), and glutamine 288.

Belongs to the glycosyltransferase 28 family. MurG subfamily.

It is found in the cell inner membrane. The catalysed reaction is di-trans,octa-cis-undecaprenyl diphospho-N-acetyl-alpha-D-muramoyl-L-alanyl-D-glutamyl-meso-2,6-diaminopimeloyl-D-alanyl-D-alanine + UDP-N-acetyl-alpha-D-glucosamine = di-trans,octa-cis-undecaprenyl diphospho-[N-acetyl-alpha-D-glucosaminyl-(1-&gt;4)]-N-acetyl-alpha-D-muramoyl-L-alanyl-D-glutamyl-meso-2,6-diaminopimeloyl-D-alanyl-D-alanine + UDP + H(+). Its pathway is cell wall biogenesis; peptidoglycan biosynthesis. In terms of biological role, cell wall formation. Catalyzes the transfer of a GlcNAc subunit on undecaprenyl-pyrophosphoryl-MurNAc-pentapeptide (lipid intermediate I) to form undecaprenyl-pyrophosphoryl-MurNAc-(pentapeptide)GlcNAc (lipid intermediate II). This chain is UDP-N-acetylglucosamine--N-acetylmuramyl-(pentapeptide) pyrophosphoryl-undecaprenol N-acetylglucosamine transferase, found in Pseudomonas paraeruginosa (strain DSM 24068 / PA7) (Pseudomonas aeruginosa (strain PA7)).